The primary structure comprises 217 residues: Adenylate kinase (217 aa).

10–15 (GAGKGT) provides a ligand contact to ATP. Residues 30-59 (STGDMLREAVAKGTELGKKAKEYMDKGELV) are NMP. Residues Thr31, Arg36, 57–59 (ELV), 85–88 (GFPR), and Gln92 each bind AMP. The interval 126–163 (YRRTCRNCGAVYHLIYAPPKEDNKCDKCGGELYQRDDD) is LID. Residue Arg127 participates in ATP binding. Zn(2+) contacts are provided by Cys130 and Cys133. 136–137 (VY) is an ATP binding site. The Zn(2+) site is built by Cys150 and Cys153. Arg160 and Arg171 together coordinate AMP. Lys199 provides a ligand contact to ATP.

This sequence belongs to the adenylate kinase family. Monomer.

Its subcellular location is the cytoplasm. The catalysed reaction is AMP + ATP = 2 ADP. It participates in purine metabolism; AMP biosynthesis via salvage pathway; AMP from ADP: step 1/1. Catalyzes the reversible transfer of the terminal phosphate group between ATP and AMP. Plays an important role in cellular energy homeostasis and in adenine nucleotide metabolism. The chain is Adenylate kinase from Archaeoglobus fulgidus (strain ATCC 49558 / DSM 4304 / JCM 9628 / NBRC 100126 / VC-16).